The following is a 364-amino-acid chain: Pre-mRNA-splicing factor SLT11 (364 aa).

The interval 331-364 is disordered; sequence KSTDNAKNDKKKTSKKVHKDRSKKSKPRANKLTI. Basic residues predominate over residues 339 to 364; the sequence is DKKKTSKKVHKDRSKKSKPRANKLTI.

The protein belongs to the SLT11 family. As to quaternary structure, belongs to the CWC complex (or CEF1-associated complex), a spliceosome subcomplex composed of the U2, U5 and U6 snRNAs and at least BUD13, BUD31, BRR2, CDC40, CEF1, CLF1, CUS1, CWC2, CWC15, CWC21, CWC22, CWC23, CWC24, CWC25, CWC27, ECM2, HSH155, IST3, ISY1, LEA1, MSL1, NTC20, PRP8, PRP9, PRP11, PRP19, PRP21, PRP22, PRP45, PRP46, SLU7, SMB1, SMD1, SMD2, SMD3, SMX2, SMX3, SNT309, SNU114, SPP2, SYF1, SYF2, RSE1 and YJU2. Interacts with SLU7.

It is found in the nucleus. Functionally, involved in pre-mRNA splicing. Facilitates the cooperative formation of U2/U6 helix II in association with stem II in the spliceosome. Binds to RNA. The sequence is that of Pre-mRNA-splicing factor SLT11 (ECM2) from Saccharomyces cerevisiae (strain ATCC 204508 / S288c) (Baker's yeast).